A 519-amino-acid polypeptide reads, in one-letter code: NAD-dependent histone deacetylase SIR2 (519 aa).

A disordered region spans residues 154-212 (EIDENDNKNDGTNNSDIDSDIDSNSDMDSQSESGELDDAMDVDDSLSENEDEYDQDMST). Over residues 187–208 (GELDDAMDVDDSLSENEDEYDQ) the composition is skewed to acidic residues. One can recognise a Deacetylase sirtuin-type domain in the interval 221 to 486 (MTPFKYKLPD…SYLCKCLKWD (266 aa)). NAD(+)-binding positions include 246–265 (GAGISTSLGIPDFRSFKGLY) and 328–331 (QNID). Residue His-348 is the Proton acceptor of the active site. Zn(2+) contacts are provided by Cys-356, Cys-359, Cys-380, and Cys-383. Residues 430–432 (GTS), 455–457 (NKD), and Cys-472 each bind NAD(+).

The protein belongs to the sirtuin family. Class I subfamily. Interacts with HXK1. Zn(2+) serves as cofactor.

The protein localises to the nucleus. The enzyme catalyses N(6)-acetyl-L-lysyl-[protein] + NAD(+) + H2O = 2''-O-acetyl-ADP-D-ribose + nicotinamide + L-lysyl-[protein]. Functionally, NAD-dependent deacetylase. Heterochromatin component that silences transcription at silent mating loci, telomeres and the ribosomal DNA, and that also suppresses recombination in the rDNA and extends replicative life span. It acts as a NAD-dependent histone deacetylase, which deacetylates 'Lys-9' and 'Lys-14' of Histone H3 and 'Lys-16' of Histone H4. Functions in the distribution of oxidatively damaged proteins during cell division. Mediates phenotypic switching. This Candida albicans (strain SC5314 / ATCC MYA-2876) (Yeast) protein is NAD-dependent histone deacetylase SIR2.